Reading from the N-terminus, the 328-residue chain is DNA-directed RNA polymerase subunit alpha (328 aa).

The tract at residues 1–230 is alpha N-terminal domain (alpha-NTD); sequence MIQITGRKFK…IILDHFMFIE (230 aa). The segment at 257–328 is alpha C-terminal domain (alpha-CTD); it reads PEDVMSKKVE…FGLSLRKGDK (72 aa).

Belongs to the RNA polymerase alpha chain family. In terms of assembly, homodimer. The RNAP catalytic core consists of 2 alpha, 1 beta, 1 beta' and 1 omega subunit. When a sigma factor is associated with the core the holoenzyme is formed, which can initiate transcription.

It carries out the reaction RNA(n) + a ribonucleoside 5'-triphosphate = RNA(n+1) + diphosphate. Its function is as follows. DNA-dependent RNA polymerase catalyzes the transcription of DNA into RNA using the four ribonucleoside triphosphates as substrates. The sequence is that of DNA-directed RNA polymerase subunit alpha from Fervidobacterium nodosum (strain ATCC 35602 / DSM 5306 / Rt17-B1).